The following is a 119-amino-acid chain: Large ribosomal subunit protein uL18 (119 aa).

Belongs to the universal ribosomal protein uL18 family. In terms of assembly, part of the 50S ribosomal subunit; part of the 5S rRNA/L5/L18/L25 subcomplex. Contacts the 5S and 23S rRNAs.

Functionally, this is one of the proteins that bind and probably mediate the attachment of the 5S RNA into the large ribosomal subunit, where it forms part of the central protuberance. This chain is Large ribosomal subunit protein uL18, found in Xanthomonas oryzae pv. oryzae (strain MAFF 311018).